The sequence spans 300 residues: Tyrosine recombinase XerD (300 aa).

The 84-residue stretch at 6–89 (LFHKRLIEQF…ALKVFFHFLK (84 aa)) folds into the Core-binding (CB) domain. Residues 108–293 (RLPSILSTEE…ASESLIEKFH (186 aa)) enclose the Tyr recombinase domain. Catalysis depends on residues Arg152, Lys174, His245, Arg248, and His271. Tyr280 acts as the O-(3'-phospho-DNA)-tyrosine intermediate in catalysis.

This sequence belongs to the 'phage' integrase family. XerD subfamily. Forms a cyclic heterotetrameric complex composed of two molecules of XerC and two molecules of XerD.

The protein localises to the cytoplasm. In terms of biological role, site-specific tyrosine recombinase, which acts by catalyzing the cutting and rejoining of the recombining DNA molecules. The XerC-XerD complex is essential to convert dimers of the bacterial chromosome into monomers to permit their segregation at cell division. It also contributes to the segregational stability of plasmids. This is Tyrosine recombinase XerD from Chlamydia trachomatis serovar D (strain ATCC VR-885 / DSM 19411 / UW-3/Cx).